The chain runs to 157 residues: MIINSIIEFLQAADIKKQILGIDFGEKKVGVAISNIEHTVAMPLQTIFATNQDRINKIQEIAVAYNIGAIVIGLPFKLDGTETSQTHRVKDFANKLANKLLLPIFLCDERLTSKAANNLLKMGNIKRKVRNAIDDRVAASIILEGTLKRMQNSKSYF.

Belongs to the YqgF nuclease family.

It is found in the cytoplasm. Its function is as follows. Could be a nuclease involved in processing of the 5'-end of pre-16S rRNA. The sequence is that of Putative pre-16S rRNA nuclease from Orientia tsutsugamushi (strain Ikeda) (Rickettsia tsutsugamushi).